Reading from the N-terminus, the 990-residue chain is Importin beta-like protein kap111 (990 aa).

The protein belongs to the importin beta family.

The protein resides in the nucleus. Functionally, functions as a component of the nuclear pore complex (NPC). NPC components, collectively referred to as nucleoporins (NUPs), can play the role of both NPC structural components and of docking or interaction partners for transiently associated nuclear transport factors. Active directional transport is assured by both, a Phe-Gly (FG) repeat affinity gradient for these transport factors across the NPC and a transport cofactor concentration gradient across the nuclear envelope. In Schizosaccharomyces pombe (strain 972 / ATCC 24843) (Fission yeast), this protein is Importin beta-like protein kap111 (kap111).